Reading from the N-terminus, the 139-residue chain is Putative nickel-responsive regulator (139 aa).

Residues His-76, His-87, His-89, and Cys-95 each coordinate Ni(2+).

It belongs to the transcriptional regulatory CopG/NikR family. Ni(2+) is required as a cofactor.

In terms of biological role, transcriptional regulator. The protein is Putative nickel-responsive regulator of Rhodopseudomonas palustris (strain HaA2).